The following is a 585-amino-acid chain: Mitochondrial translation ATP-dependent RNA helicase mrh5 (585 aa).

A Q motif motif is present at residues 87 to 117 (PKFHELPLNQNILDGLSTNFAEYKNSTPLQQ). Residues 121 to 351 (NALMKSGVSF…SRYITDQLGI (231 aa)) form the Helicase ATP-binding domain. 134-141 (GWNGSGKS) contacts ATP. The DEAD box motif lies at 261 to 264 (DESD). The region spanning 390 to 584 (NLPYEFVRFN…PKSYEFDDEH (195 aa)) is the Helicase C-terminal domain.

The protein belongs to the DEAD box helicase family. In terms of assembly, component of the MRH5C complex, composed of mrh5, ppr4, mtf2, and sls1. Proteins mtf2 and sls1 form a subcomplex that serves as a scaffold to bring mrh5 and ppr4 together. The MRH5C complex associates with the small subunit of the mitochondrial ribosome.

The protein localises to the mitochondrion. It catalyses the reaction ATP + H2O = ADP + phosphate + H(+). In terms of biological role, translation activation factor that as part of the MRH5C complex specifically recruits cox1 mRNA to the mitochondrial ribosome for translation initiation. This is Mitochondrial translation ATP-dependent RNA helicase mrh5 from Schizosaccharomyces pombe (strain 972 / ATCC 24843) (Fission yeast).